The chain runs to 66 residues: Large ribosomal subunit protein bL33c (66 aa).

The protein belongs to the bacterial ribosomal protein bL33 family.

It is found in the plastid. The protein localises to the chloroplast. The sequence is that of Large ribosomal subunit protein bL33c from Chloranthus spicatus (Chulantree).